Consider the following 512-residue polypeptide: 2-isopropylmalate synthase (512 aa).

Residues 5 to 268 form the Pyruvate carboxyltransferase domain; that stretch reads LIIFDTTLRD…DIGIDTQQIL (264 aa). Residues aspartate 14, histidine 202, histidine 204, and asparagine 239 each contribute to the Mn(2+) site. The segment at 394 to 512 is regulatory domain; that stretch reads GFVSLSQHSE…SKADRVAAQG (119 aa).

It belongs to the alpha-IPM synthase/homocitrate synthase family. LeuA type 1 subfamily. In terms of assembly, homodimer. Mn(2+) serves as cofactor.

The protein resides in the cytoplasm. It carries out the reaction 3-methyl-2-oxobutanoate + acetyl-CoA + H2O = (2S)-2-isopropylmalate + CoA + H(+). Its pathway is amino-acid biosynthesis; L-leucine biosynthesis; L-leucine from 3-methyl-2-oxobutanoate: step 1/4. Functionally, catalyzes the condensation of the acetyl group of acetyl-CoA with 3-methyl-2-oxobutanoate (2-ketoisovalerate) to form 3-carboxy-3-hydroxy-4-methylpentanoate (2-isopropylmalate). The polypeptide is 2-isopropylmalate synthase (Polaromonas naphthalenivorans (strain CJ2)).